The chain runs to 45 residues: Cytochrome b559 subunit beta (45 aa).

The residue at position 2 (Thr-2) is an N-acetylthreonine. Over 2-17 (TSNTPNQEPVSYPIFT) the chain is Cytoplasmic. The chain crosses the membrane as a helical span at residues 18-42 (VRWVAVHTLAVPTIFFLGAIAAMQF). His-24 provides a ligand contact to heme. Topologically, residues 43–45 (IQR) are lumenal.

Heterodimer of an alpha subunit and a beta subunit. PSII is composed of 1 copy each of membrane proteins PsbA, PsbB, PsbC, PsbD, PsbE, PsbF, PsbH, PsbI, PsbJ, PsbK, PsbL, PsbM, PsbT, PsbX, PsbY, PsbZ, Psb30/Ycf12, peripheral proteins PsbO, CyanoQ (PsbQ), PsbU, PsbV and a large number of cofactors. It forms dimeric complexes. Part of a photosystem II (PSII) assembly intermediate complex PSII-I; crystallized from a strain deleted of psbJ, it forms monomeric PSII before addition of the oxygen evolving complex. PSII-I includes 3 assembly factors not found in mature PSII (Psb27, Psb28 and Psb34). The cofactor is heme b.

It localises to the cellular thylakoid membrane. In terms of biological role, this b-type cytochrome is tightly associated with the reaction center of photosystem II (PSII). PSII is a light-driven water:plastoquinone oxidoreductase that uses light energy to abstract electrons from H(2)O, generating O(2) and a proton gradient subsequently used for ATP formation. It consists of a core antenna complex that captures photons, and an electron transfer chain that converts photonic excitation into a charge separation. This chain is Cytochrome b559 subunit beta, found in Thermosynechococcus vestitus (strain NIES-2133 / IAM M-273 / BP-1).